The primary structure comprises 64 residues: Large ribosomal subunit protein uL30 (64 aa).

This sequence belongs to the universal ribosomal protein uL30 family. Part of the 50S ribosomal subunit.

In Bdellovibrio bacteriovorus (strain ATCC 15356 / DSM 50701 / NCIMB 9529 / HD100), this protein is Large ribosomal subunit protein uL30.